Consider the following 171-residue polypeptide: T-cell surface glycoprotein CD3 delta chain (171 aa).

The signal sequence occupies residues 1–21 (MEHSTFLSGLVLATLLSQVSP). The Extracellular portion of the chain corresponds to 22-105 (FKIPVEELED…CVELDPATLA (84 aa)). A disulfide bridge links Cys-37 with Cys-73. 3 N-linked (GlcNAc...) asparagine glycosylation sites follow: Asn-38, Asn-54, and Asn-74. A helical membrane pass occupies residues 106–126 (GIIVTDVIATLLLALGVFCFA). The Cytoplasmic segment spans residues 127–171 (GHETGRLSGAADTQALLRNDQVYQPLRDRDDAQYSRLGGNWARNK). Positions 138–166 (DTQALLRNDQVYQPLRDRDDAQYSRLGGN) constitute an ITAM domain. 2 positions are modified to phosphotyrosine: Tyr-149 and Tyr-160.

The TCR-CD3 complex is composed of a CD3D/CD3E and a CD3G/CD3E heterodimers that preferentially associate with TCRalpha and TCRbeta, respectively, to form TCRalpha/CD3E/CD3G and TCRbeta/CD3G/CD3E trimers. In turn, the hexamer interacts with CD3Z homodimer to form the TCR-CD3 complex. Alternatively, TCRalpha and TCRbeta can be replaced by TCRgamma and TCRdelta. Interacts with coreceptors CD4 and CD8. Post-translationally, phosphorylated on Tyr residues after T-cell receptor triggering by LCK in association with CD4/CD8. In terms of tissue distribution, CD3D is mostly present on T-lymphocytes with its TCR-CD3 partners. Present also in fetal NK-cells.

Its subcellular location is the cell membrane. Functionally, part of the TCR-CD3 complex present on T-lymphocyte cell surface that plays an essential role in adaptive immune response. When antigen presenting cells (APCs) activate T-cell receptor (TCR), TCR-mediated signals are transmitted across the cell membrane by the CD3 chains CD3D, CD3E, CD3G and CD3Z. All CD3 chains contain immunoreceptor tyrosine-based activation motifs (ITAMs) in their cytoplasmic domain. Upon TCR engagement, these motifs become phosphorylated by Src family protein tyrosine kinases LCK and FYN, resulting in the activation of downstream signaling pathways. In addition of this role of signal transduction in T-cell activation, CD3D plays an essential role in thymocyte differentiation. Indeed, participates in correct intracellular TCR-CD3 complex assembly and surface expression. In absence of a functional TCR-CD3 complex, thymocytes are unable to differentiate properly. Interacts with CD4 and CD8 and thus serves to establish a functional link between the TCR and coreceptors CD4 and CD8, which is needed for activation and positive selection of CD4 or CD8 T-cells. The protein is T-cell surface glycoprotein CD3 delta chain (CD3D) of Macaca fascicularis (Crab-eating macaque).